The chain runs to 743 residues: NAD(P)H-quinone oxidoreductase subunit 5, chloroplastic (743 aa).

The next 16 helical transmembrane spans lie at 9-29 (WIIPFLPLPVPMLIGVGLLLF), 40-60 (WAFQSVLLLSIVMIFSMNLSI), 89-109 (IDPLTSIMSILITTVGILVLI), 125-145 (FAYMSFFSTSMLGLVTSSNLI), 147-167 (IYIFWELVGICSYLLIGFWFT), 185-205 (GDFGLLLGILGFYWITGSFEF), 219-239 (NEVNFLFVTLCAVLLFAGAIA), 258-278 (TPISALIHAATMVAAGIFLVA), 283-303 (LFIVIPHIMNFISLIGIITVF), 327-347 (LGYMMLALGMGSYRSALFHLI), 354-374 (ALLFLGSGSVIHSMETLVGYC), 396-416 (ISFLLGTLSLCGIPPLACFWS), 425-445 (WLYSPIFAIIAWSTAGLTAFY), 548-568 (LFPILILIIFTLFIGFLGIPF), 607-627 (VFSVSIASFGIFIAFFLYKPV), and 723-743 (YLFFYFSYVSICLLSYYFFNL).

Belongs to the complex I subunit 5 family. NDH is composed of at least 16 different subunits, 5 of which are encoded in the nucleus.

It localises to the plastid. Its subcellular location is the chloroplast thylakoid membrane. The catalysed reaction is a plastoquinone + NADH + (n+1) H(+)(in) = a plastoquinol + NAD(+) + n H(+)(out). It catalyses the reaction a plastoquinone + NADPH + (n+1) H(+)(in) = a plastoquinol + NADP(+) + n H(+)(out). Its function is as follows. NDH shuttles electrons from NAD(P)H:plastoquinone, via FMN and iron-sulfur (Fe-S) centers, to quinones in the photosynthetic chain and possibly in a chloroplast respiratory chain. The immediate electron acceptor for the enzyme in this species is believed to be plastoquinone. Couples the redox reaction to proton translocation, and thus conserves the redox energy in a proton gradient. This is NAD(P)H-quinone oxidoreductase subunit 5, chloroplastic (ndhF) from Carthamus tinctorius (Safflower).